The following is a 258-amino-acid chain: 1-(5-phosphoribosyl)-5-[(5-phosphoribosylamino)methylideneamino] imidazole-4-carboxamide isomerase (258 aa).

The active-site Proton acceptor is Asp-17. Asp-136 acts as the Proton donor in catalysis.

Belongs to the HisA/HisF family.

Its subcellular location is the cytoplasm. It carries out the reaction 1-(5-phospho-beta-D-ribosyl)-5-[(5-phospho-beta-D-ribosylamino)methylideneamino]imidazole-4-carboxamide = 5-[(5-phospho-1-deoxy-D-ribulos-1-ylimino)methylamino]-1-(5-phospho-beta-D-ribosyl)imidazole-4-carboxamide. It functions in the pathway amino-acid biosynthesis; L-histidine biosynthesis; L-histidine from 5-phospho-alpha-D-ribose 1-diphosphate: step 4/9. The sequence is that of 1-(5-phosphoribosyl)-5-[(5-phosphoribosylamino)methylideneamino] imidazole-4-carboxamide isomerase from Corynebacterium jeikeium (strain K411).